A 129-amino-acid chain; its full sequence is DNA-directed RNA polymerase subunit omega (129 aa).

Positions 77 to 98 are disordered; the sequence is VDEPESEVVPALSSAPQNPEAI.

Belongs to the RNA polymerase subunit omega family. As to quaternary structure, the RNAP catalytic core consists of 2 alpha, 1 beta, 1 beta' and 1 omega subunit. When a sigma factor is associated with the core the holoenzyme is formed, which can initiate transcription.

The enzyme catalyses RNA(n) + a ribonucleoside 5'-triphosphate = RNA(n+1) + diphosphate. In terms of biological role, promotes RNA polymerase assembly. Latches the N- and C-terminal regions of the beta' subunit thereby facilitating its interaction with the beta and alpha subunits. In Methylocella silvestris (strain DSM 15510 / CIP 108128 / LMG 27833 / NCIMB 13906 / BL2), this protein is DNA-directed RNA polymerase subunit omega.